Here is an 802-residue protein sequence, read N- to C-terminus: Elongation factor G, mitochondrial (802 aa).

Residues 1-24 (MRCPSLARLPNRALSGLTRSPVRL) constitute a mitochondrion transit peptide. The tr-type G domain maps to 100–387 (SRLRNIGIAA…GVIDYLPNPS (288 aa)). Residues 109 to 116 (AHIDSGKT), 185 to 189 (DTPGH), and 239 to 242 (NKMD) each bind GTP.

This sequence belongs to the TRAFAC class translation factor GTPase superfamily. Classic translation factor GTPase family. EF-G/EF-2 subfamily.

Its subcellular location is the mitochondrion. It participates in protein biosynthesis; polypeptide chain elongation. Its function is as follows. Mitochondrial GTPase that catalyzes the GTP-dependent ribosomal translocation step during translation elongation. During this step, the ribosome changes from the pre-translocational (PRE) to the post-translocational (POST) state as the newly formed A-site-bound peptidyl-tRNA and P-site-bound deacylated tRNA move to the P and E sites, respectively. Catalyzes the coordinated movement of the two tRNA molecules, the mRNA and conformational changes in the ribosome. The polypeptide is Elongation factor G, mitochondrial (mef1) (Aspergillus fumigatus (strain CBS 144.89 / FGSC A1163 / CEA10) (Neosartorya fumigata)).